We begin with the raw amino-acid sequence, 756 residues long: Neutral ceramidase (756 aa).

The Cytoplasmic segment spans residues 1-11 (MAKRTFSTLEA). A helical; Signal-anchor for type II membrane protein transmembrane segment spans residues 12 to 32 (FLIFLLVIMTVITVALLTLLF). The Lumenal segment spans residues 33–756 (VTSGTIENHK…ISSPFEVVTT (724 aa)). O-linked (GalNAc...) threonine glycosylation is found at Thr56, Thr57, Thr58, and Thr64. Leu110 provides a ligand contact to Ca(2+). His170 serves as a coordination point for Zn(2+). The N-linked (GlcNAc...) asparagine glycan is linked to Asn193. His279 is a binding site for Zn(2+). Ser330 (nucleophile) is an active-site residue. 2 disulfides stabilise this stretch: Cys338/Cys352 and Cys345/Cys360. N-linked (GlcNAc...) asparagine glycosylation is found at Asn407 and Asn444. An intrachain disulfide couples Cys424 to Cys474. Residues Glu516 and Tyr555 each contribute to the Zn(2+) site. Residues Asp688, Ser690, and Thr693 each coordinate Ca(2+). The tract at residues 746-756 (GISSPFEVVTT) is required for correct folding and localization.

It belongs to the neutral ceramidase family. May interact with CAV1. Zn(2+) is required as a cofactor. Post-translationally, proteolytic cleavage of the N-terminus removes the signal-anchor and produces a soluble form of the protein. In terms of processing, N-glycosylated. Required for enzyme activity. O-glycosylated. Required to retain it as a type II membrane protein at the cell surface. Post-translationally, phosphorylated. May prevent ubiquitination and subsequent degradation. In terms of processing, ubiquitinated, leading to its degradation by the proteasome. Ubiquitination is triggered by nitric oxide. Widely expressed. Strongly expressed in small intestine and to a lower extent in liver and kidney. Highly expressed in duodenum, jejunum and ileum along the brush border of the small intestine (at protein level).

It localises to the cell membrane. It is found in the membrane raft. The protein resides in the membrane. The protein localises to the caveola. Its subcellular location is the golgi apparatus membrane. It localises to the mitochondrion. It is found in the secreted. The protein resides in the extracellular exosome. The enzyme catalyses an N-acylsphing-4-enine + H2O = sphing-4-enine + a fatty acid. It carries out the reaction N-hexadecanoylsphing-4-enine + H2O = sphing-4-enine + hexadecanoate. It catalyses the reaction N-dodecanoylsphing-4-enine + H2O = dodecanoate + sphing-4-enine. The catalysed reaction is N-octadecanoylsphing-4-enine + H2O = sphing-4-enine + octadecanoate. The enzyme catalyses N-octanoylsphing-4-enine + H2O = octanoate + sphing-4-enine. It carries out the reaction N-(hexanoyl)sphing-4-enine + H2O = hexanoate + sphing-4-enine. It catalyses the reaction N-tetradecanoylsphing-4-enine + H2O = tetradecanoate + sphing-4-enine. The catalysed reaction is N-(9Z-octadecenoyl)-sphing-4-enine + H2O = sphing-4-enine + (9Z)-octadecenoate. The enzyme catalyses N-(15Z-tetracosenoyl)-sphing-4-enine + H2O = (15Z)-tetracosenoate + sphing-4-enine. It carries out the reaction sphinganine + hexadecanoate = N-hexadecanoylsphinganine + H2O. It catalyses the reaction N-(octadecanoyl)-sphinganine + H2O = sphinganine + octadecanoate. It participates in lipid metabolism; sphingolipid metabolism. With respect to regulation, inhibited by D-erythro-MAPP. In terms of biological role, plasma membrane ceramidase that hydrolyzes sphingolipid ceramides into sphingosine and free fatty acids at neutral pH. Ceramides, sphingosine, and its phosphorylated form sphingosine-1-phosphate are bioactive lipids that mediate cellular signaling pathways regulating several biological processes including cell proliferation, apoptosis and differentiation. Also catalyzes the reverse reaction allowing the synthesis of ceramides from fatty acids and sphingosine. Together with sphingomyelinase, participates in the production of sphingosine and sphingosine-1-phosphate from the degradation of sphingomyelin, a sphingolipid enriched in the plasma membrane of cells. Also participates in the hydrolysis of ceramides from the extracellular milieu allowing the production of sphingosine-1-phosphate inside and outside cells. This is the case for instance with the digestion of dietary sphingolipids in the intestinal tract. In Mus musculus (Mouse), this protein is Neutral ceramidase (Asah2).